The following is a 64-amino-acid chain: Large ribosomal subunit protein uL29 (64 aa).

It belongs to the universal ribosomal protein uL29 family.

The polypeptide is Large ribosomal subunit protein uL29 (Pseudomonas entomophila (strain L48)).